We begin with the raw amino-acid sequence, 241 residues long: Leucyl/phenylalanyl-tRNA--protein transferase (241 aa).

Belongs to the L/F-transferase family.

It is found in the cytoplasm. It catalyses the reaction N-terminal L-lysyl-[protein] + L-leucyl-tRNA(Leu) = N-terminal L-leucyl-L-lysyl-[protein] + tRNA(Leu) + H(+). The catalysed reaction is N-terminal L-arginyl-[protein] + L-leucyl-tRNA(Leu) = N-terminal L-leucyl-L-arginyl-[protein] + tRNA(Leu) + H(+). It carries out the reaction L-phenylalanyl-tRNA(Phe) + an N-terminal L-alpha-aminoacyl-[protein] = an N-terminal L-phenylalanyl-L-alpha-aminoacyl-[protein] + tRNA(Phe). In terms of biological role, functions in the N-end rule pathway of protein degradation where it conjugates Leu, Phe and, less efficiently, Met from aminoacyl-tRNAs to the N-termini of proteins containing an N-terminal arginine or lysine. In Colwellia psychrerythraea (strain 34H / ATCC BAA-681) (Vibrio psychroerythus), this protein is Leucyl/phenylalanyl-tRNA--protein transferase.